A 331-amino-acid chain; its full sequence is 4-hydroxy-3-methylbut-2-enyl diphosphate reductase (331 aa).

Position 12 (Cys12) interacts with [4Fe-4S] cluster. Positions 43 and 81 each coordinate (2E)-4-hydroxy-3-methylbut-2-enyl diphosphate. Dimethylallyl diphosphate-binding residues include His43 and His81. The isopentenyl diphosphate site is built by His43 and His81. Cys103 serves as a coordination point for [4Fe-4S] cluster. His131 contributes to the (2E)-4-hydroxy-3-methylbut-2-enyl diphosphate binding site. Position 131 (His131) interacts with dimethylallyl diphosphate. Residue His131 coordinates isopentenyl diphosphate. Residue Glu133 is the Proton donor of the active site. A (2E)-4-hydroxy-3-methylbut-2-enyl diphosphate-binding site is contributed by Thr170. [4Fe-4S] cluster is bound at residue Cys198. Positions 226, 228, and 271 each coordinate (2E)-4-hydroxy-3-methylbut-2-enyl diphosphate. Dimethylallyl diphosphate is bound by residues Ser226, Asn228, and Ser271. Residues Ser226, Asn228, and Ser271 each coordinate isopentenyl diphosphate.

Belongs to the IspH family. [4Fe-4S] cluster serves as cofactor.

The catalysed reaction is isopentenyl diphosphate + 2 oxidized [2Fe-2S]-[ferredoxin] + H2O = (2E)-4-hydroxy-3-methylbut-2-enyl diphosphate + 2 reduced [2Fe-2S]-[ferredoxin] + 2 H(+). It catalyses the reaction dimethylallyl diphosphate + 2 oxidized [2Fe-2S]-[ferredoxin] + H2O = (2E)-4-hydroxy-3-methylbut-2-enyl diphosphate + 2 reduced [2Fe-2S]-[ferredoxin] + 2 H(+). Its pathway is isoprenoid biosynthesis; dimethylallyl diphosphate biosynthesis; dimethylallyl diphosphate from (2E)-4-hydroxy-3-methylbutenyl diphosphate: step 1/1. It participates in isoprenoid biosynthesis; isopentenyl diphosphate biosynthesis via DXP pathway; isopentenyl diphosphate from 1-deoxy-D-xylulose 5-phosphate: step 6/6. Catalyzes the conversion of 1-hydroxy-2-methyl-2-(E)-butenyl 4-diphosphate (HMBPP) into a mixture of isopentenyl diphosphate (IPP) and dimethylallyl diphosphate (DMAPP). Acts in the terminal step of the DOXP/MEP pathway for isoprenoid precursor biosynthesis. In Listeria monocytogenes serovar 1/2a (strain ATCC BAA-679 / EGD-e), this protein is 4-hydroxy-3-methylbut-2-enyl diphosphate reductase.